A 295-amino-acid polypeptide reads, in one-letter code: Pantothenate synthetase (295 aa).

30 to 37 provides a ligand contact to ATP; that stretch reads MGNLHDGH. Catalysis depends on His-37, which acts as the Proton donor. Gln-61 serves as a coordination point for (R)-pantoate. Position 61 (Gln-61) interacts with beta-alanine. Position 149–152 (149–152) interacts with ATP; it reads GEKD. Gln-155 contacts (R)-pantoate. ATP is bound by residues Val-178 and 186-189; that span reads MSSR.

This sequence belongs to the pantothenate synthetase family. Homodimer.

It is found in the cytoplasm. It carries out the reaction (R)-pantoate + beta-alanine + ATP = (R)-pantothenate + AMP + diphosphate + H(+). It functions in the pathway cofactor biosynthesis; (R)-pantothenate biosynthesis; (R)-pantothenate from (R)-pantoate and beta-alanine: step 1/1. Catalyzes the condensation of pantoate with beta-alanine in an ATP-dependent reaction via a pantoyl-adenylate intermediate. The polypeptide is Pantothenate synthetase (Photobacterium profundum (strain SS9)).